We begin with the raw amino-acid sequence, 210 residues long: Fimbriae Z protein (210 aa).

A Response regulatory domain is found at 5–121 (SVIIMDTHPI…DIFHAVQMIL (117 aa)). Asp-56 bears the 4-aspartylphosphate mark. The HTH luxR-type domain maps to 143–208 (NSSTVTVLSN…ELIDYAKLYE (66 aa)). Positions 167–186 (NKEIADKLLLSNKTVSAHKS) form a DNA-binding region, H-T-H motif.

Its subcellular location is the cytoplasm. In Escherichia coli O157:H7, this protein is Fimbriae Z protein (fimZ).